The sequence spans 86 residues: Cell division topological specificity factor (86 aa).

This sequence belongs to the MinE family.

Functionally, prevents the cell division inhibition by proteins MinC and MinD at internal division sites while permitting inhibition at polar sites. This ensures cell division at the proper site by restricting the formation of a division septum at the midpoint of the long axis of the cell. In Polaromonas sp. (strain JS666 / ATCC BAA-500), this protein is Cell division topological specificity factor.